Here is a 558-residue protein sequence, read N- to C-terminus: Oxygen-dependent choline dehydrogenase (558 aa).

4–33 (DYIIIGAGSAGNVLATRLTEDSDTTVLLLE) provides a ligand contact to FAD. His-473 acts as the Proton acceptor in catalysis.

The protein belongs to the GMC oxidoreductase family. FAD is required as a cofactor.

It catalyses the reaction choline + A = betaine aldehyde + AH2. The enzyme catalyses betaine aldehyde + NAD(+) + H2O = glycine betaine + NADH + 2 H(+). It participates in amine and polyamine biosynthesis; betaine biosynthesis via choline pathway; betaine aldehyde from choline (cytochrome c reductase route): step 1/1. Functionally, involved in the biosynthesis of the osmoprotectant glycine betaine. Catalyzes the oxidation of choline to betaine aldehyde and betaine aldehyde to glycine betaine at the same rate. The polypeptide is Oxygen-dependent choline dehydrogenase (Citrobacter koseri (strain ATCC BAA-895 / CDC 4225-83 / SGSC4696)).